Here is a 397-residue protein sequence, read N- to C-terminus: (S)-8-oxocitronellyl enol synthase ISY2 (397 aa).

NADP(+) contacts are provided by residues 36–38 (TGL), 64–65 (RR), 82–83 (DV), 106–107 (TW), Gln144, Tyr180, Ile207, and 214–216 (SMM). The active site involves Tyr180.

It belongs to the short-chain dehydrogenases/reductases (SDR) family.

It catalyses the reaction (S)-8-oxocitronellyl enol + NADP(+) = (6E)-8-oxogeranial + NADPH + H(+). The catalysed reaction is (S)-8-oxocitronellyl enol + NAD(+) = (6E)-8-oxogeranial + NADH + H(+). In terms of biological role, iridoid synthase that catalyzes the first step in generation of the iridoid ring scaffold using the linear monoterpene (6E)-8-oxogeranial as substrate. Iridoids comprise a large family of distinctive bicyclic monoterpenes that possess a wide range of pharmacological activities, including anticancer, anti-inflammatory, antifungal and antibacterial activities. Catalyzes the conversion of the linear monoterpene (6E)-8-oxogeranial to (S)-8-oxocitronellyl enol, a precursor of nepetalactones, which are metabolites that are both insect-repellent and have euphoric effect in cats. The polypeptide is (S)-8-oxocitronellyl enol synthase ISY2 (Nepeta cataria (Catnip)).